The following is a 553-amino-acid chain: Urocanate hydratase (553 aa).

NAD(+) is bound by residues 45–46, Gln123, 169–171, Asp189, Arg194, 235–236, 256–260, 266–267, Tyr315, and Gly485; these read GG, GMG, NA, QTSAH, and YV.

Belongs to the urocanase family. NAD(+) serves as cofactor.

Its subcellular location is the cytoplasm. The enzyme catalyses 4-imidazolone-5-propanoate = trans-urocanate + H2O. Its pathway is amino-acid degradation; L-histidine degradation into L-glutamate; N-formimidoyl-L-glutamate from L-histidine: step 2/3. Its function is as follows. Catalyzes the conversion of urocanate to 4-imidazolone-5-propionate. The protein is Urocanate hydratase of Staphylococcus saprophyticus subsp. saprophyticus (strain ATCC 15305 / DSM 20229 / NCIMB 8711 / NCTC 7292 / S-41).